The following is a 184-amino-acid chain: Intraflagellar transport protein 22 homolog (184 aa).

Residues 10–17 (GPTESGKT), 62–66 (DCGGD), and 122–125 (KKPG) each bind GTP.

It belongs to the small GTPase superfamily. Rab family.

In Xenopus tropicalis (Western clawed frog), this protein is Intraflagellar transport protein 22 homolog (ift22).